A 325-amino-acid chain; its full sequence is MSTFPTSTIVHPTVLLSVVDHYNRVAKDTNKRVVGALLGSNNKGVVDVSNCYGLPFEEDEANPNIWFLDHNFHENMFAMFKKINARENVVGWYSTGPKIRPADQDINELFRRYTPNPVMVIIDVAPKELGIPTKSYVTVEEINKDTSESTMRFQHIPSSIDAVEAEEICIEHLLRDVKDSSISSLTTQITDKKISLKHLLTNLQEMQHYLKLVCDGTLPPNHQIIGYIQDIINLSPNLNANEISKSFAVQNNDTMSVIYLSSMIRSIIALHNLIINKTANREAEKKADIINSTPPTTATSPSVADKGKEKEQNAFNGADKPSKQA.

Residues 8-142 enclose the MPN domain; that stretch reads TIVHPTVLLS…TKSYVTVEEI (135 aa). The segment at 285-325 is disordered; the sequence is KKADIINSTPPTTATSPSVADKGKEKEQNAFNGADKPSKQA. The segment covering 292 to 302 has biased composition (low complexity); it reads STPPTTATSPS.

This sequence belongs to the peptidase M67A family.

Acts as a regulatory subunit of the 26S proteasome which is involved in the ATP-dependent degradation of ubiquitinated proteins. The chain is 26S proteasome non-ATPase regulatory subunit 7 (psmD7) from Dictyostelium discoideum (Social amoeba).